We begin with the raw amino-acid sequence, 38 residues long: Potassium channel toxin alpha-KTx 3.2 (38 aa).

3 disulfides stabilise this stretch: cysteine 8/cysteine 28, cysteine 14/cysteine 33, and cysteine 18/cysteine 35.

Belongs to the short scorpion toxin superfamily. Potassium channel inhibitor family. Alpha-KTx 03 subfamily. Expressed by the venom gland.

It localises to the secreted. Potent inhibitor of the Shaker potassium channels and its mammalian homologs (Kv1.1/KCNA1, Kv1.3/KCNA3, Kv1.6/KCNA6) (Ki&lt;1 nM for all channels). Also blocks Kv1.2/KCNA2 (IC(50)=26.8 nM). It also shows a weak interaction with nicotinic acetylcholine receptors (nAChR), suggesting it may weakly inhibit it. The protein is Potassium channel toxin alpha-KTx 3.2 of Leiurus hebraeus (Hebrew deathstalker scorpion).